Here is a 167-residue protein sequence, read N- to C-terminus: MFPMVTEFMNYGQQTIRAARYIGQGFMITLSHANRLPVTIQYPYEKLITSERFRGRIHFEFDKCIACEVCVRVCPIDLPVVDWKLETDIRKKRLLNYSIDFGICIFCGNCVEYCPTNCLSMTEEYELSTYNRHELNYNQIALGRLPVSIIDDYTIRTISSSPQIKNG.

4Fe-4S ferredoxin-type domains follow at residues 55–84 (GRIH…VDWK) and 95–124 (LNYS…MTEE). 8 residues coordinate [4Fe-4S] cluster: Cys64, Cys67, Cys70, Cys74, Cys104, Cys107, Cys110, and Cys114.

Belongs to the complex I 23 kDa subunit family. In terms of assembly, NDH is composed of at least 16 different subunits, 5 of which are encoded in the nucleus. [4Fe-4S] cluster is required as a cofactor.

It localises to the plastid. Its subcellular location is the chloroplast thylakoid membrane. It carries out the reaction a plastoquinone + NADH + (n+1) H(+)(in) = a plastoquinol + NAD(+) + n H(+)(out). The catalysed reaction is a plastoquinone + NADPH + (n+1) H(+)(in) = a plastoquinol + NADP(+) + n H(+)(out). NDH shuttles electrons from NAD(P)H:plastoquinone, via FMN and iron-sulfur (Fe-S) centers, to quinones in the photosynthetic chain and possibly in a chloroplast respiratory chain. The immediate electron acceptor for the enzyme in this species is believed to be plastoquinone. Couples the redox reaction to proton translocation, and thus conserves the redox energy in a proton gradient. This is NAD(P)H-quinone oxidoreductase subunit I, chloroplastic from Jasminum nudiflorum (Winter jasmine).